The sequence spans 477 residues: Homeobox protein Meis2 (477 aa).

The segment at 71–191 (DALKRDKDAI…KMPIDLVIDE (121 aa)) is required for interaction with PBX1. Residues 110–193 (GGDVCSSDSF…PIDLVIDERD (84 aa)) form the MEIS N-terminal domain. The segment covering 193–203 (DGSSKSDHEEL) has biased composition (basic and acidic residues). The segment at 193-283 (DGSSKSDHEE…KKRQKKRGIF (91 aa)) is disordered. Composition is skewed to polar residues over residues 204–217 (SGSS…NPSS) and 239–251 (GHAS…SSEQ). Positions 276 to 338 (RQKKRGIFPK…NARRRIVQPM (63 aa)) form a DNA-binding region, homeobox; TALE-type. The interaction with DNA stretch occupies residues 299 to 333 (LTHPYPSEEQKKQLAQDTGLTILQVNNWFINARRR). Positions 340–477 (DQSNRAGFLL…GGQVMDIHAQ (138 aa)) are transcriptional activation domain.

Belongs to the TALE/MEIS homeobox family. Monomer and homodimer. Heterodimer with HOXB13. Isoform Meis2A interacts with TLX1. Isoform Meis2B interacts with HOXA13 and PBX1 isoform PBX1b. Isoform Meis2D interacts with SP1, SP3 and KLF4. Isoform Meis2D interacts with PBX1 isoform PBX1a; the interaction partially relieves MEIS2 autoinhibition. Isoform Meis2B is part of a PDX1:PBX1b:MEIS2b complex; Meis2B is recruited by PBX1b and can be replaced by isoform Meis2D in a small fraction of complexes. Can form trimeric complexes including HOXB8 and PBX2 or PBX3. As to expression, displays spatially restricted expression patterns in the developing nervous system, limbs, face, and in various viscera. In adult, it is mainly expressed in the brain and female genital tract, with a different distribution of the alternative splice forms in these organs. Lower expression in lung and only basal level in heart, liver, kidney, spleen, and testis. Expressed in pancreatic islets (beta-cells only).

Its subcellular location is the nucleus. It localises to the cytoplasm. It is found in the perinuclear region. Its function is as follows. Involved in transcriptional regulation. Binds to HOX or PBX proteins to form dimers, or to a DNA-bound dimer of PBX and HOX proteins and thought to have a role in stabilization of the homeoprotein-DNA complex. Isoform Meis2B is required for the activity of a PDX1:PBX1b:MEIS2b complex in pancreatic acinar cells involved in the transcriptional activation of the ELA1 enhancer; the complex binds to the enhancer B element and cooperates with the transcription factor 1 complex (PTF1) bound to the enhancer A element; MEIS2 is not involved in complex DNA-binding. Probably in complex with PBX1, is involved in transcriptional regulation by KLF4. Isoforms Meis2B and Meis2D can bind to a EPHA8 promoter sequence containing the DNA motif 5'-CGGTCA-3'; in cooperation with a PBX protein (such as PBX2) is proposed to be involved in the transcriptional activation of EPHA8 in the developing midbrain. May be involved in regulation of myeloid differentiation. Can bind to the DNA sequence 5'-TGACAG-3'in the activator ACT sequence of the D(1A) dopamine receptor (DRD1) promoter and activate DRD1 transcription. The sequence is that of Homeobox protein Meis2 (Meis2) from Mus musculus (Mouse).